A 310-amino-acid polypeptide reads, in one-letter code: Methionyl-tRNA formyltransferase (310 aa).

110 to 113 (SLLP) serves as a coordination point for (6S)-5,6,7,8-tetrahydrofolate.

It belongs to the Fmt family.

The catalysed reaction is L-methionyl-tRNA(fMet) + (6R)-10-formyltetrahydrofolate = N-formyl-L-methionyl-tRNA(fMet) + (6S)-5,6,7,8-tetrahydrofolate + H(+). Its function is as follows. Attaches a formyl group to the free amino group of methionyl-tRNA(fMet). The formyl group appears to play a dual role in the initiator identity of N-formylmethionyl-tRNA by promoting its recognition by IF2 and preventing the misappropriation of this tRNA by the elongation apparatus. This Clostridium tetani (strain Massachusetts / E88) protein is Methionyl-tRNA formyltransferase.